The sequence spans 299 residues: tRNA dimethylallyltransferase (299 aa).

Residue glycine 13 to threonine 20 participates in ATP binding. Substrate is bound at residue threonine 15–threonine 20. Residues aspartate 38 to glutamine 41 form an interaction with substrate tRNA region.

It belongs to the IPP transferase family. In terms of assembly, monomer. The cofactor is Mg(2+).

It carries out the reaction adenosine(37) in tRNA + dimethylallyl diphosphate = N(6)-dimethylallyladenosine(37) in tRNA + diphosphate. Its function is as follows. Catalyzes the transfer of a dimethylallyl group onto the adenine at position 37 in tRNAs that read codons beginning with uridine, leading to the formation of N6-(dimethylallyl)adenosine (i(6)A). The chain is tRNA dimethylallyltransferase from Prochlorococcus marinus (strain MIT 9211).